Consider the following 331-residue polypeptide: Lipoyl synthase (331 aa).

Residues 1-33 (MSDALIASSSEAPQSPAEQYDPTRKQKSADKTA) are disordered. Over residues 7–19 (ASSSEAPQSPAEQ) the composition is skewed to low complexity. Over residues 21–33 (DPTRKQKSADKTA) the composition is skewed to basic and acidic residues. Positions 78, 83, 89, 104, 108, 111, and 318 each coordinate [4Fe-4S] cluster. Residues 89-307 (CFGKGTATFM…EEEAYKMGFT (219 aa)) form the Radical SAM core domain.

Belongs to the radical SAM superfamily. Lipoyl synthase family. [4Fe-4S] cluster serves as cofactor.

The protein localises to the cytoplasm. The catalysed reaction is [[Fe-S] cluster scaffold protein carrying a second [4Fe-4S](2+) cluster] + N(6)-octanoyl-L-lysyl-[protein] + 2 oxidized [2Fe-2S]-[ferredoxin] + 2 S-adenosyl-L-methionine + 4 H(+) = [[Fe-S] cluster scaffold protein] + N(6)-[(R)-dihydrolipoyl]-L-lysyl-[protein] + 4 Fe(3+) + 2 hydrogen sulfide + 2 5'-deoxyadenosine + 2 L-methionine + 2 reduced [2Fe-2S]-[ferredoxin]. It participates in protein modification; protein lipoylation via endogenous pathway; protein N(6)-(lipoyl)lysine from octanoyl-[acyl-carrier-protein]: step 2/2. In terms of biological role, catalyzes the radical-mediated insertion of two sulfur atoms into the C-6 and C-8 positions of the octanoyl moiety bound to the lipoyl domains of lipoate-dependent enzymes, thereby converting the octanoylated domains into lipoylated derivatives. The protein is Lipoyl synthase of Cupriavidus pinatubonensis (strain JMP 134 / LMG 1197) (Cupriavidus necator (strain JMP 134)).